We begin with the raw amino-acid sequence, 1577 residues long: Dynamin-binding protein (1577 aa).

Residue Met1 is modified to N-acetylmethionine. 4 SH3 domains span residues 2-61 (EAGS…IVTI), 66-126 (EGER…ELCL), 145-204 (YSMG…LLGP), and 243-302 (EPGT…LCPD). 2 disordered regions span residues 211–244 (SVSS…EEEP) and 335–395 (EEQR…WEMP). Residues 230-244 (VGEEEIGPDEDEEEP) show a composition bias toward acidic residues. Over residues 335–344 (EEQRHETSDH) the composition is skewed to basic and acidic residues. Ser496 carries the post-translational modification Phosphoserine. 2 disordered regions span residues 591–624 (GSSK…TSPH) and 639–659 (VRPS…NAVS). A compositionally biased stretch (pro residues) spans 639–649 (VRPSRPAPLPP). Ser684 carries the post-translational modification Phosphoserine. The stretch at 693–757 (LVLVRIEEME…ELQQLREMTL (65 aa)) forms a coiled coil. A DH domain is found at 784 to 967 (KRAKVIEELL…KEINVNINEY (184 aa)). The region spanning 1008-1217 (LKHLTGFAPQ…LKVAGREGNL (210 aa)) is the BAR domain. The stretch at 1136-1173 (ERAEKLKDKKTLEELQSARNNYEALNAQLLDELPKFHQ) forms a coiled coil. Residues 1285–1348 (PPEKLFQAER…YSSFLKPYNP (64 aa)) enclose the SH3 5 domain. Residues 1348-1487 (PRRSHSDASV…SVPGRNGQSQ (140 aa)) form a disordered region. A compositionally biased stretch (polar residues) spans 1376 to 1405 (RQNSGSTLTFNPSSMAVSFTSGSCQKQPQD). Residues 1419 to 1442 (SASLNPSNSESSPSRCPSDPDSTS) are compositionally biased toward low complexity. The 64-residue stretch at 1513 to 1576 (EGNQVYFAVY…PSNYIRKTEY (64 aa)) folds into the SH3 6 domain.

Binds DNM1 via its N-terminal SH3 domains. The C-terminal SH3 domain binds a complex containing actin, tubulin, Hsp70 and actin-regulatory proteins, such as ENAH, EVL, WIRE, CR16, WAVE1 and NAP1L1. Interacts with FASLG. Interacts (via SH3 domain 6) with WASL. Interacts (via SH3 domain 6) interacts with ENAH. Interacts (via C-terminal domain) with TJP1; required for the apical cell-cell junction localization of DNMBP. In terms of assembly, (Microbial infection) Interacts (via SH3 domain 6) with L.monocytogenes InlC. As to expression, detected in heart, brain, lung, liver, skeletal muscle, kidney and pancreas.

Its subcellular location is the cytoplasm. The protein resides in the golgi apparatus. It localises to the golgi stack. The protein localises to the cytoskeleton. It is found in the synapse. Its subcellular location is the cell junction. Plays a critical role as a guanine nucleotide exchange factor (GEF) for CDC42 in several intracellular processes associated with the actin and microtubule cytoskeleton. Regulates the structure of apical junctions through F-actin organization in epithelial cells. Participates in the normal lumenogenesis of epithelial cell cysts by regulating spindle orientation. Plays a role in ciliogenesis. May play a role in membrane trafficking between the cell surface and the Golgi. The polypeptide is Dynamin-binding protein (Homo sapiens (Human)).